A 187-amino-acid polypeptide reads, in one-letter code: UPF0340 protein SMU_87 (187 aa).

Belongs to the UPF0340 family.

The chain is UPF0340 protein SMU_87 from Streptococcus mutans serotype c (strain ATCC 700610 / UA159).